The primary structure comprises 1099 residues: Protein transport protein Sec24A (1099 aa).

Disordered stretches follow at residues 1–36 (MSQP…GPVQ), 65–139 (KTLN…LPGA), and 279–317 (SQPT…AGLP). 5 stretches are compositionally biased toward polar residues: residues 10–20 (GGSSTGLQAQN), 68–90 (NPVS…NYQG), 108–126 (SLHS…QNPA), 279–292 (SQPT…SRSV), and 303–317 (YQNT…AGLP). Zn(2+) is bound by residues Cys-437, Cys-440, Cys-458, and Cys-461. The segment at 437–461 (CRSCRTYINPFVSFLDQRRWKCNLC) is zinc finger-like. The Gelsolin-like repeat unit spans residues 972-1044 (PQPPILQLSV…TPESARTIAF (73 aa)).

The protein belongs to the SEC23/SEC24 family. SEC24 subfamily. As to quaternary structure, COPII is composed of at least five proteins: the Sec23/24 complex, the Sec13/31 complex and Sar1. Interacts with TMED2. Interacts (as part of the Sec23/24 complex) with SEC22B; recruits SEC22B into COPII-coated vesicles for its transport from the endoplasmic reticulum to the Golgi. Interacts with STING1; promoting STING1 translocation to COPII vesicles in a STEEP1-dependent manner. Interacts with TMEM39A. Interacts with SACM1L; this interaction is reduced in the absence of TMEM39A. Interacts with kinase FAM20C; transport of FAM20C from the endoplasmic reticulum to the Golgi is likely to be mediated by COPII vesicles.

It is found in the cytoplasmic vesicle. It localises to the COPII-coated vesicle membrane. Its subcellular location is the endoplasmic reticulum membrane. The protein resides in the cytoplasm. The protein localises to the cytosol. Component of the coat protein complex II (COPII) which promotes the formation of transport vesicles from the endoplasmic reticulum (ER). The coat has two main functions, the physical deformation of the endoplasmic reticulum membrane into vesicles and the selection of cargo molecules for their transport to the Golgi complex. Plays a central role in cargo selection within the COPII complex and together with SEC24B may have a different specificity compared to SEC24C and SEC24D. May package preferentially cargos with cytoplasmic DxE or LxxLE motifs and may also recognize conformational epitopes. This Bos taurus (Bovine) protein is Protein transport protein Sec24A.